A 578-amino-acid chain; its full sequence is Peptidyl-prolyl cis-trans isomerase-like 2 (578 aa).

The region spanning 40 to 114 (RRLPFNFCAA…SDSLGAGLSD (75 aa)) is the U-box domain. Residues 240–260 (KAREQGGDVNRSSTALTKPTG) are disordered. The PPIase cyclophilin-type domain occupies 321-475 (ATGFARMETN…NKILIKDIVI (155 aa)). The segment at 505–578 (GTDDDKTTWT…GGGFGNFDNW (74 aa)) is disordered. A compositionally biased stretch (polar residues) spans 538-548 (KTTTQQSTPTV). A compositionally biased stretch (acidic residues) spans 551–560 (ADLEDVDTWE). The span at 569-578 (GGGFGNFDNW) shows a compositional bias: gly residues.

It belongs to the cyclophilin-type PPIase family. PPIL2 subfamily.

It is found in the nucleus. The enzyme catalyses [protein]-peptidylproline (omega=180) = [protein]-peptidylproline (omega=0). The catalysed reaction is S-ubiquitinyl-[E2 ubiquitin-conjugating enzyme]-L-cysteine + [acceptor protein]-L-lysine = [E2 ubiquitin-conjugating enzyme]-L-cysteine + N(6)-ubiquitinyl-[acceptor protein]-L-lysine.. The protein operates within protein modification; protein ubiquitination. May catalyze the cis-trans isomerization of proline imidic peptide bonds in oligopeptides thereby assisting the folding of proteins. May also function as a chaperone, playing a role in intracellular transport of proteins. May also have a protein ubiquitin ligase activity acting as an E3 ubiquitin protein ligase or as a ubiquitin-ubiquitin ligase promoting elongation of ubiquitin chains on proteins. The sequence is that of Peptidyl-prolyl cis-trans isomerase-like 2 (CYP8) from Gibberella zeae (strain ATCC MYA-4620 / CBS 123657 / FGSC 9075 / NRRL 31084 / PH-1) (Wheat head blight fungus).